Reading from the N-terminus, the 832-residue chain is Protein translocase subunit SecA (832 aa).

Residues Gln-87, 105 to 109, and Asp-512 contribute to the ATP site; that span reads GEGKT.

It belongs to the SecA family. As to quaternary structure, monomer and homodimer. Part of the essential Sec protein translocation apparatus which comprises SecA, SecYEG and auxiliary proteins SecDF-YajC and YidC.

The protein localises to the cell membrane. Its subcellular location is the cytoplasm. It carries out the reaction ATP + H2O + cellular proteinSide 1 = ADP + phosphate + cellular proteinSide 2.. Part of the Sec protein translocase complex. Interacts with the SecYEG preprotein conducting channel. Has a central role in coupling the hydrolysis of ATP to the transfer of proteins into and across the cell membrane, serving as an ATP-driven molecular motor driving the stepwise translocation of polypeptide chains across the membrane. This is Protein translocase subunit SecA from Wigglesworthia glossinidia brevipalpis.